We begin with the raw amino-acid sequence, 876 residues long: Pre-mRNA-splicing factor ATP-dependent RNA helicase-like protein PRP2 (876 aa).

The interval 1 to 111 (MSSITSETGK…KGLLGDSENE (111 aa)) is disordered. Residue Ser2 is modified to N-acetylserine. The segment covering 61-70 (VFSNTNQGPE) has biased composition (polar residues). Residues 233-399 (LQEIKKNQVL…FDNCPIFNVP (167 aa)) enclose the Helicase ATP-binding domain. 246–253 (GETGSGKT) is a binding site for ATP. The DEAH box motif lies at 346–349 (DEAH). The Helicase C-terminal domain maps to 424 to 598 (TIFQIHTTQS…NTVLLLLSLG (175 aa)).

The protein belongs to the DEAD box helicase family. DEAH subfamily. Interacts directly with pre-mRNA. According to PubMed:2251118, associated with spliceosomes prior to and throughout step 1 of the splicing reaction. According to PubMed:8943336, it leaves the spliceosome before reaction 1. Interacts with SPP2.

It localises to the nucleus. The catalysed reaction is ATP + H2O = ADP + phosphate + H(+). In terms of biological role, involved in pre-mRNA splicing. Is required together with ATP and at least one other factor, for the first cleavage-ligation reaction. Functions as a molecular motor in the activation of the precatalytic spliceosome for the first transesterification reaction of pre-mRNA splicing by hydrolyzing ATP to cause the activation of the spliceosome without the occurrence of splicing. Capable of hydrolyzing nucleoside triphosphates in the presence of single-stranded RNAs such as poly(U). This Saccharomyces cerevisiae (strain ATCC 204508 / S288c) (Baker's yeast) protein is Pre-mRNA-splicing factor ATP-dependent RNA helicase-like protein PRP2 (PRP2).